Reading from the N-terminus, the 267-residue chain is Cell division control protein 11 (267 aa).

A Septin-type G domain is found at Gln-6–Gly-263. Residues Gly-16 to Ser-23 form a G1 motif region. Residues Gly-16 to Ser-23, Gly-66, Lys-146 to Glu-154, and Arg-212 contribute to the GTP site. Residues Asp-63–Gly-66 form a G3 motif region. The G4 motif stretch occupies residues Ser-145–Asp-148.

Belongs to the TRAFAC class TrmE-Era-EngA-EngB-Septin-like GTPase superfamily. Septin GTPase family. Component of the septin complex.

Its function is as follows. Septins are GTPases involved in cytokinesis. The septins localize to the site of cleavage and act as a structural scaffold that recruits different components involved in diverse processes at specific stages during the cell cycle. Septins are also involved in cell morphogenesis, chitin deposition, cell cycle regulation, cell compartmentalization and spore wall formation. In Encephalitozoon cuniculi (strain GB-M1) (Microsporidian parasite), this protein is Cell division control protein 11 (CDC11).